A 768-amino-acid chain; its full sequence is Lon protease (768 aa).

Residues 4-198 (APFLPIRDLV…RILDEIVAEM (195 aa)) form the Lon N-terminal domain. Residue 349–356 (GPPGIGKT) coordinates ATP. In terms of domain architecture, Lon proteolytic spans 586 to 768 (TGKIGVVNGL…DDVSKLVFVK (183 aa)). Residues S674 and K717 contribute to the active site.

This sequence belongs to the peptidase S16 family. In terms of assembly, homohexamer. Organized in a ring with a central cavity.

It is found in the cytoplasm. The enzyme catalyses Hydrolysis of proteins in presence of ATP.. ATP-dependent serine protease that mediates the selective degradation of mutant and abnormal proteins as well as certain short-lived regulatory proteins. Required for cellular homeostasis and for survival from DNA damage and developmental changes induced by stress. Degrades polypeptides processively to yield small peptide fragments that are 5 to 10 amino acids long. Binds to DNA in a double-stranded, site-specific manner. The chain is Lon protease from Fusobacterium nucleatum subsp. nucleatum (strain ATCC 25586 / DSM 15643 / BCRC 10681 / CIP 101130 / JCM 8532 / KCTC 2640 / LMG 13131 / VPI 4355).